Consider the following 238-residue polypeptide: Gas vesicle protein F (238 aa).

Belongs to the gas vesicle GvpF/GvpL family. As to quaternary structure, binds GvpA.

The protein localises to the gas vesicle. Its function is as follows. A minor component of the gas vesicle, may be involved in preventing GvpA aggregation during gas vesicle nucleation. Gas vesicles are hollow, gas filled proteinaceous nanostructures found in some microorganisms. It is not clear what function gas vesicles perform in soil bacteria. In Streptomyces sp. (strain CB03234), this protein is Gas vesicle protein F.